Consider the following 349-residue polypeptide: Twinfilin-2 (349 aa).

2 consecutive ADF-H domains span residues 4–139 (QTGI…KHVS) and 177–313 (GLAF…DEVH). Residues 324–349 (AKPKGPVGKRGQKRLIKGPGENGEDS) are disordered.

Belongs to the actin-binding proteins ADF family. Twinfilin subfamily. In terms of assembly, interacts with G-actin; ADP-actin form and capping protein (CP).

It is found in the cytoplasm. Its subcellular location is the cytoskeleton. It localises to the perinuclear region. Functionally, actin-binding protein involved in motile and morphological processes. Inhibits actin polymerization, likely by sequestering G-actin. This chain is Twinfilin-2 (TWF2), found in Gallus gallus (Chicken).